The following is a 534-amino-acid chain: Serine protease vicPa (534 aa).

An N-terminal signal peptide occupies residues 1–17 (MLCYLLIHILCLQAVLG). N-linked (GlcNAc...) asparagine glycosylation is found at Asn-65 and Asn-126. The active-site Charge relay system is the Ser-174. Asn-297, Asn-416, and Asn-436 each carry an N-linked (GlcNAc...) asparagine glycan. The Charge relay system role is filled by Asp-450.

This sequence belongs to the peptidase S28 family.

It functions in the pathway mycotoxin biosynthesis. Serine protease, part of the gene cluster that mediates the biosynthesis of the secondary metabolite victorin, the molecular basis for Victoria blight of oats. Within the pathway, vicPa and vicPb are probably involved in the processing of the vicA1 and vicA2 precursors. The pathway starts with the processing of the precursor vicA1 by several endopeptidases including kexin proteases as well as the cluster-specific S28 family peptidases vicPa and vicPb to produce 7 identical copies of the hexapeptide Gly-Leu-Lys-Leu-Ala-Phe. After being excised from the precursor peptide, the core peptides are cyclized and modified post-translationally by enzymes encoded within the gene cluster. The ustYa family oxidase vicYb is required for the formation of the macrocycle in victorin and the copper amine oxidases (CAOs) vicK1 and vicK2 are responsible for converting victorin to the active form by oxidizing the N-terminal glycyl residue in the peptides to glyoxylate. Relaxed substrate specificity of enzymes in the victorin biosynthetic pathway results in a metabolic grid that produces a set of analogs including victorinines B, C, E or HV-toxin M. In Bipolaris victoriae (strain FI3) (Victoria blight of oats agent), this protein is Serine protease vicPa.